A 187-amino-acid polypeptide reads, in one-letter code: MMFGGVGMATLPLSLIFAFKNRPKCVITRAQYVKVMAWQEVTDLAKRSNELGSPTRRKRLEERTKVSEKCEESPADQELVFLEDDVQALNEAFPQGEKADTSWALTVLFYLAKLVFGILGLALSVIWLLHIIVFMLVNPPAFPFLNQVFIQLDSAWGLLGTTAFAIFCYYLVMSVISGEMHSIYPMK.

The chain crosses the membrane as a helical span at residues 1–21 (MMFGGVGMATLPLSLIFAFKN). Topologically, residues 22 to 100 (RPKCVITRAQ…EAFPQGEKAD (79 aa)) are extracellular. A helical membrane pass occupies residues 101-119 (TSWALTVLFYLAKLVFGIL). Topologically, residues 120 to 125 (GLALSV) are cytoplasmic. A helical transmembrane segment spans residues 126–145 (IWLLHIIVFMLVNPPAFPFL). Residues 146-155 (NQVFIQLDSA) lie on the Extracellular side of the membrane. The helical transmembrane segment at 156-176 (WGLLGTTAFAIFCYYLVMSVI) threads the bilayer. Residues 177–187 (SGEMHSIYPMK) are Cytoplasmic-facing.

The protein belongs to the Casparian strip membrane proteins (CASP) family. In terms of assembly, homodimer and heterodimers.

It is found in the cell membrane. The polypeptide is CASP-like protein SELMODRAFT_416718 (Selaginella moellendorffii (Spikemoss)).